Consider the following 434-residue polypeptide: 23S rRNA (uracil(1939)-C(5))-methyltransferase RlmD (434 aa).

A TRAM domain is found at 10 to 68; sequence RVTTRQIITVTVNDLDPFGQGVARHQGKALFVSGVLPQEQAEVVLVEDKKQYARAQVKR. [4Fe-4S] cluster contacts are provided by Cys81, Cys87, Cys90, and Cys162. S-adenosyl-L-methionine contacts are provided by Gln265, Phe294, Asn299, Glu315, Asn342, and Asp363. Cys389 (nucleophile) is an active-site residue.

It belongs to the class I-like SAM-binding methyltransferase superfamily. RNA M5U methyltransferase family. RlmD subfamily.

It carries out the reaction uridine(1939) in 23S rRNA + S-adenosyl-L-methionine = 5-methyluridine(1939) in 23S rRNA + S-adenosyl-L-homocysteine + H(+). Catalyzes the formation of 5-methyl-uridine at position 1939 (m5U1939) in 23S rRNA. The polypeptide is 23S rRNA (uracil(1939)-C(5))-methyltransferase RlmD (Klebsiella pneumoniae (strain 342)).